A 305-amino-acid polypeptide reads, in one-letter code: Putative HTH-type transcriptional regulatory protein Saci_1344 (305 aa).

Residues L128 to I183 form the HTH cro/C1-type domain. Positions L139–K158 form a DNA-binding region, H-T-H motif.

The protein is Putative HTH-type transcriptional regulatory protein Saci_1344 of Sulfolobus acidocaldarius (strain ATCC 33909 / DSM 639 / JCM 8929 / NBRC 15157 / NCIMB 11770).